Reading from the N-terminus, the 202-residue chain is Small ribosomal subunit protein uS4c (202 aa).

The S4 RNA-binding domain maps to 89-152 (MRLDNIIFRL…QSNTFINNCI (64 aa)).

Belongs to the universal ribosomal protein uS4 family. As to quaternary structure, part of the 30S ribosomal subunit. Contacts protein S5. The interaction surface between S4 and S5 is involved in control of translational fidelity.

The protein resides in the plastid. One of the primary rRNA binding proteins, it binds directly to 16S rRNA where it nucleates assembly of the body of the 30S subunit. Functionally, with S5 and S12 plays an important role in translational accuracy. This chain is Small ribosomal subunit protein uS4c (rps4), found in Epifagus virginiana (Beechdrops).